The following is a 143-amino-acid chain: Transcriptional regulator MraZ (143 aa).

SpoVT-AbrB domains lie at 5 to 47 (EYEH…TLEE) and 76 to 119 (AVEV…DRET).

It belongs to the MraZ family. As to quaternary structure, forms oligomers.

The protein resides in the cytoplasm. The protein localises to the nucleoid. The protein is Transcriptional regulator MraZ of Staphylococcus saprophyticus subsp. saprophyticus (strain ATCC 15305 / DSM 20229 / NCIMB 8711 / NCTC 7292 / S-41).